Here is a 249-residue protein sequence, read N- to C-terminus: Pulmonary surfactant-associated protein A (249 aa).

A signal peptide spans 1 to 20; it reads MLRWPLALTFLLLAVSGLEC. Positions 28 to 100 constitute a Collagen-like domain; the sequence is ASPGIPGTPG…PGERGPPGLP (73 aa). Positions 29-102 are disordered; sequence SPGIPGTPGS…ERGPPGLPAH (74 aa). P30, P33, P36, P42, P54, P57, P63, and P70 each carry 4-hydroxyproline. Residues 42 to 51 are compositionally biased toward basic and acidic residues; that stretch reads PGRDGRDGIK. Positions 84-93 are enriched in basic and acidic residues; the sequence is ERGEKGEPGE. The 117-residue stretch at 133–249 folds into the C-type lectin domain; sequence AVGEKVFSTN…QQYRLAICEF (117 aa). 2 disulfides stabilise this stretch: C155/C247 and C225/C239. N208 is a glycosylation site (N-linked (GlcNAc...) asparagine). Ca(2+) is bound by residues E216, R218, N235, and D236.

It belongs to the SFTPA family. Oligomeric complex of 6 set of homotrimers.

It is found in the secreted. It localises to the extracellular space. Its subcellular location is the extracellular matrix. The protein localises to the surface film. In terms of biological role, in presence of calcium ions, it binds to surfactant phospholipids and contributes to lower the surface tension at the air-liquid interface in the alveoli of the mammalian lung and is essential for normal respiration. Enhances the expression of MYO18A/SP-R210 on alveolar macrophages. This chain is Pulmonary surfactant-associated protein A (SFTPA1), found in Sus scrofa (Pig).